A 2059-amino-acid polypeptide reads, in one-letter code: Desmoplakin-A (2059 aa).

Positions 1 to 11 (MSLSGSQTRLH) are enriched in polar residues. The tract at residues 1-25 (MSLSGSQTRLHQISRRSSSRPDLTA) is disordered. 2 coiled-coil regions span residues 320–354 (IPQK…LLKN) and 397–453 (FKEA…VQTL). Residues 665-690 (EVSSGKTATGVSSGKTATGVSSGKTS) are disordered. Low complexity predominate over residues 671–690 (TATGVSSGKTATGVSSGKTS). Coiled coils occupy residues 1062–1229 (MEEL…AELE) and 1261–1383 (LQQD…LQQR). 6 Plectin repeats span residues 1450–1488 (YLGG…TLEL), 1489–1526 (LEAQ…KDKL), 1564–1602 (LLEA…NEIL), 1666–1694 (IVDP…FLEL), 1847–1885 (LLEA…SVKL), and 1923–1961 (FLEF…AQKL). The segment at 2008-2059 (KGISSPYNVSSGPSSRSGSRAGSRTGSRSGSRRGSVDYSSSSVSYTFFSSAS) is disordered. Positions 2011–2059 (SSPYNVSSGPSSRSGSRAGSRTGSRSGSRRGSVDYSSSSVSYTFFSSAS) are enriched in low complexity.

It belongs to the plakin or cytolinker family.

The protein resides in the cell junction. It localises to the desmosome. The protein localises to the cell membrane. Functionally, involved in the organization of desmosome cell-cell junctions. Of particular importance in cell adhesion in the skin and during cardiac development. May also play a role in the regulation of Wnt, TGF-beta and Hippo signaling pathways. The polypeptide is Desmoplakin-A (Danio rerio (Zebrafish)).